The primary structure comprises 103 residues: uncharacterized protein (103 aa).

This is an uncharacterized protein from Microplitis demolitor (Parasitoid wasp).